Reading from the N-terminus, the 498-residue chain is Dynein regulatory complex subunit 2 (498 aa).

Coiled coils occupy residues 98–160 (VIKS…RKTI), 250–311 (KDEK…KAQR), and 417–441 (SLRHRRAQLLEINEKLREMLRQYLD).

This sequence belongs to the DRC2 family. Component of the nexin-dynein regulatory complex (N-DRC). Interacts with DRC1.

The protein resides in the cytoplasm. It is found in the cytoskeleton. The protein localises to the flagellum basal body. It localises to the cell projection. Its subcellular location is the cilium. The protein resides in the flagellum. It is found in the flagellum axoneme. Component of the nexin-dynein regulatory complex (N-DRC), a key regulator of ciliary/flagellar motility which maintains the alignment and integrity of the distal axoneme and regulates microtubule sliding in motile axonemes. Plays a critical role in the assembly of N-DRC and also stabilizes the assembly of multiple inner dynein arms and radial spokes. Coassembles with DRC1 to form a central scaffold needed for assembly of the N-DRC and its attachment to the outer doublet microtubules. The sequence is that of Dynein regulatory complex subunit 2 (CCDC65) from Bos taurus (Bovine).